Consider the following 507-residue polypeptide: ATP synthase subunit alpha, chloroplastic (507 aa).

170–177 provides a ligand contact to ATP; that stretch reads GDRQTGKT.

Belongs to the ATPase alpha/beta chains family. F-type ATPases have 2 components, CF(1) - the catalytic core - and CF(0) - the membrane proton channel. CF(1) has five subunits: alpha(3), beta(3), gamma(1), delta(1), epsilon(1). CF(0) has four main subunits: a, b, b' and c.

The protein resides in the plastid. The protein localises to the chloroplast thylakoid membrane. The enzyme catalyses ATP + H2O + 4 H(+)(in) = ADP + phosphate + 5 H(+)(out). In terms of biological role, produces ATP from ADP in the presence of a proton gradient across the membrane. The alpha chain is a regulatory subunit. This is ATP synthase subunit alpha, chloroplastic from Ranunculus macranthus (Large buttercup).